The sequence spans 390 residues: Galactokinase (390 aa).

33–36 (EHTD) contacts substrate. Residues S67 and 124–130 (GSGLSSS) contribute to the ATP site. Positions 130 and 162 each coordinate Mg(2+). D174 acts as the Proton acceptor in catalysis. Substrate is bound at residue Y224.

It belongs to the GHMP kinase family. GalK subfamily.

Its subcellular location is the cytoplasm. It catalyses the reaction alpha-D-galactose + ATP = alpha-D-galactose 1-phosphate + ADP + H(+). Its pathway is carbohydrate metabolism; galactose metabolism. Its function is as follows. Catalyzes the transfer of the gamma-phosphate of ATP to D-galactose to form alpha-D-galactose-1-phosphate (Gal-1-P). In Streptococcus mutans serotype c (strain ATCC 700610 / UA159), this protein is Galactokinase.